The following is a 612-amino-acid chain: MTTAAIPGLQGEAPTNNQELLNWIAEAVELFQPEAVVFADGSQEEWDRMAEELVEAGTLIRLNEEKRPNSFLARSNPSDVARVESRTFICSENQEDAGPTNNWAPPQAMKEEMTEVYRGSMKGRTMYVVPFCMGPITDPEPKLGVQLTDSAYVVMSMRIMTRMGKDALDKIGENGSFVRCLHSVGAPLEEGQEDVAWPCNDTKYITQFPETKEIWSYGSGYGGNAILAKKCYALRIASVMAREEGWMAEHMLILKLTNPEGQAYHIAAAFPSACGKTNLAMITPTIPGWKAEVVGDDIAWLKFREDGHLYAVNPENGFFGVAPGTNYASNPIAMQTMEPGNTLFTNVALTDDGDIWWEGMDGDAPEHLIDWKGNDWTPESNQPAAHPNSRYCVAIEQCPTAAPEFNDWKGVKVDAILFGGRRPDTVPLVTQTHDWEHGTMVGALLASGQTAASAEAKVGTLRHDPMAMLPFMGYNAGEYLQNWIDMGNKGGDKMPSIFLVNWFRRGEDGRFLWPGFGENSRVLKWVIDRIEGRVGAEETVVGYTARAEDLDLEGLDTPIEDIREALTAPAEQWAADLEDNAEYLTFLGPKVPTEVHEQFEALKKRIQAAQAS.

Substrate contacts are provided by residues Arg82 and 221-223 (YGG). Mn(2+) is bound by residues Lys230 and His250. Ser272 serves as a coordination point for substrate. Position 273–278 (273–278 (ACGKTN)) interacts with GTP. The active site involves Cys274. Position 297 (Asp297) interacts with Mn(2+). Residue 388 to 390 (NSR) coordinates substrate. GTP contacts are provided by residues Arg390, Arg421, and 516–519 (FGEN).

This sequence belongs to the phosphoenolpyruvate carboxykinase [GTP] family. In terms of assembly, monomer. It depends on Mn(2+) as a cofactor.

The protein localises to the cytoplasm. It catalyses the reaction oxaloacetate + GTP = phosphoenolpyruvate + GDP + CO2. It functions in the pathway carbohydrate biosynthesis; gluconeogenesis. Functionally, catalyzes the conversion of oxaloacetate (OAA) to phosphoenolpyruvate (PEP), the rate-limiting step in the metabolic pathway that produces glucose from lactate and other precursors derived from the citric acid cycle. The protein is Phosphoenolpyruvate carboxykinase [GTP] of Corynebacterium efficiens (strain DSM 44549 / YS-314 / AJ 12310 / JCM 11189 / NBRC 100395).